A 208-amino-acid polypeptide reads, in one-letter code: Ribonuclease HII (208 aa).

In terms of domain architecture, RNase H type-2 spans Pro-5–Arg-198. Residues Asp-11, Glu-12, and Asp-106 each coordinate a divalent metal cation.

This sequence belongs to the RNase HII family. It depends on Mn(2+) as a cofactor. Requires Mg(2+) as cofactor.

It is found in the cytoplasm. The enzyme catalyses Endonucleolytic cleavage to 5'-phosphomonoester.. In terms of biological role, endonuclease that specifically degrades the RNA of RNA-DNA hybrids. In Microcystis aeruginosa (strain NIES-843 / IAM M-2473), this protein is Ribonuclease HII.